Here is a 753-residue protein sequence, read N- to C-terminus: Nigerose phosphorylase (753 aa).

Residue 348-349 (WD) participates in substrate binding. Glu490 acts as the Proton donor in catalysis. A substrate-binding site is contributed by 604-605 (KQ).

It belongs to the glycosyl hydrolase 65 family. In terms of assembly, homodimer.

It is found in the cytoplasm. The enzyme catalyses nigerose + phosphate = beta-D-glucose 1-phosphate + D-glucose. With respect to regulation, does not require divalent metal ions. Functionally, catalyzes the reversible phosphorolysis of nigerose. Also shows a weak activity on kojibiose. The polypeptide is Nigerose phosphorylase (Lachnoclostridium phytofermentans (strain ATCC 700394 / DSM 18823 / ISDg) (Clostridium phytofermentans)).